Here is a 199-residue protein sequence, read N- to C-terminus: Protein shisa-like-1 (199 aa).

The first 25 residues, 1–25, serve as a signal peptide directing secretion; it reads MTSCGQQSLNVLAVLFSLLFSAVLS. The Extracellular portion of the chain corresponds to 26-97; the sequence is AHFRVCEPYT…SEGYMHNNYT (72 aa). N-linked (GlcNAc...) asparagine glycans are attached at residues N53 and N95. The helical transmembrane segment at 98 to 118 threads the bilayer; it reads ALLGVWIYGFFVLMLLVLDLL. Topologically, residues 119–199 are cytoplasmic; the sequence is YYSAMNYDIC…PLMTFQSSSA (81 aa). Residues 146-199 are disordered; sequence PRRWGNPARAPRPGQRAPQPQPPPGPLPQAPQAVHTLRGDAHSPPLMTFQSSSA. Residues 152 to 163 are compositionally biased toward low complexity; the sequence is PARAPRPGQRAP. Over residues 164 to 174 the composition is skewed to pro residues; sequence QPQPPPGPLPQ.

It belongs to the shisa family.

The protein localises to the membrane. The chain is Protein shisa-like-1 from Homo sapiens (Human).